The chain runs to 134 residues: Profilin-2 (134 aa).

Cysteine 13 and cysteine 118 are oxidised to a cystine. An Involved in PIP2 interaction motif is present at residues alanine 84–threonine 100. Threonine 114 is modified (phosphothreonine).

The protein belongs to the profilin family. Occurs in many kinds of cells as a complex with monomeric actin in a 1:1 ratio. Post-translationally, phosphorylated by MAP kinases.

The protein localises to the cytoplasm. It localises to the cytoskeleton. Functionally, binds to actin and affects the structure of the cytoskeleton. At high concentrations, profilin prevents the polymerization of actin, whereas it enhances it at low concentrations. The sequence is that of Profilin-2 from Olea europaea (Common olive).